Reading from the N-terminus, the 355-residue chain is UDP-N-acetylglucosamine--N-acetylmuramyl-(pentapeptide) pyrophosphoryl-undecaprenol N-acetylglucosamine transferase (355 aa).

UDP-N-acetyl-alpha-D-glucosamine is bound by residues Arg-166, Ser-196, and Gln-290.

The protein belongs to the glycosyltransferase 28 family. MurG subfamily.

It is found in the cell membrane. The catalysed reaction is Mur2Ac(oyl-L-Ala-gamma-D-Glu-L-Lys-D-Ala-D-Ala)-di-trans,octa-cis-undecaprenyl diphosphate + UDP-N-acetyl-alpha-D-glucosamine = beta-D-GlcNAc-(1-&gt;4)-Mur2Ac(oyl-L-Ala-gamma-D-Glu-L-Lys-D-Ala-D-Ala)-di-trans,octa-cis-undecaprenyl diphosphate + UDP + H(+). The protein operates within cell wall biogenesis; peptidoglycan biosynthesis. In terms of biological role, cell wall formation. Catalyzes the transfer of a GlcNAc subunit on undecaprenyl-pyrophosphoryl-MurNAc-pentapeptide (lipid intermediate I) to form undecaprenyl-pyrophosphoryl-MurNAc-(pentapeptide)GlcNAc (lipid intermediate II). This is UDP-N-acetylglucosamine--N-acetylmuramyl-(pentapeptide) pyrophosphoryl-undecaprenol N-acetylglucosamine transferase from Staphylococcus haemolyticus (strain JCSC1435).